A 224-amino-acid chain; its full sequence is Attacin-A (224 aa).

Residues 1 to 20 form the signal peptide; sequence MQKTSILIVALVALFAITEA. Residues 21-34 constitute a propeptide that is removed on maturation; that stretch reads LPSLPTTGPIRVRR.

The protein belongs to the attacin/sarcotoxin-2 family. As to expression, hemolymph (at protein level).

Its subcellular location is the secreted. Functionally, hemolymph antibacterial protein. This chain is Attacin-A (AttA), found in Drosophila melanogaster (Fruit fly).